The chain runs to 200 residues: Thymidine kinase (200 aa).

Residues Gly-15 to Ser-22 and Asp-88 to Gln-91 contribute to the ATP site. The active-site Proton acceptor is the Glu-89. Residues Cys-145, Cys-148, Cys-183, and His-186 each coordinate Zn(2+).

It belongs to the thymidine kinase family. Homotetramer.

Its subcellular location is the cytoplasm. The catalysed reaction is thymidine + ATP = dTMP + ADP + H(+). The protein is Thymidine kinase of Bacillus pumilus (strain SAFR-032).